The following is a 609-amino-acid chain: Tyrosine-protein kinase transforming protein Fes (609 aa).

2 disordered regions span residues 1–20 (AARADGTMGFSSELCSPQGH) and 152–208 (RDSA…GGRT). The 167-residue stretch at 8-174 (MGFSSELCSP…SKDKDRDKAK (167 aa)) folds into the F-BAR; degenerate domain. Basic and acidic residues-rich tracts occupy residues 160-175 (KYQEASKDKDRDKAKL) and 190-206 (QDDRHSTSSSEQEREGG). The SH2 domain maps to 247–336 (WYHGALPRAE…KSGIVLNRAV (90 aa)). The 262-residue stretch at 348-609 (LVLGEQIGRG…ELQSIRKRHR (262 aa)) folds into the Protein kinase domain. ATP is bound by residues 354-362 (IGRGNFGEV) and Lys377. The active-site Proton acceptor is Asp470. Tyr500 bears the Phosphotyrosine; by autocatalysis mark.

This sequence belongs to the protein kinase superfamily. Tyr protein kinase family. Fes/fps subfamily.

The enzyme catalyses L-tyrosyl-[protein] + ATP = O-phospho-L-tyrosyl-[protein] + ADP + H(+). This is Tyrosine-protein kinase transforming protein Fes (V-FES) from Felidae (cat family).